Reading from the N-terminus, the 497-residue chain is Cytochrome P450 monooxygenase cicH (497 aa).

Residues 2–19 form a helical membrane-spanning segment; it reads AILVRLFFALFVVSVYFF. Cys-439 is a binding site for heme. A glycan (N-linked (GlcNAc...) asparagine) is linked at Asn-443.

It belongs to the cytochrome P450 family. It depends on heme as a cofactor.

It localises to the membrane. It participates in phytotoxin biosynthesis. Cytochrome P450 monooxygenase; part of the gene cluster that mediates the biosynthesis of cichorine, a phytotoxin active against knapweed, corn, and soybeans. The first step in the pathway is performed by the non-reducing polyketide synthase pkbA that condenses one acetyl-CoA starter unit with 3 malonyl-CoA units. PkbA also catalyzes one methylation step to produce 3-methylorsellinate. The nonribosomal peptide synthase-like protein cicB, the cytochrome P450 monooxygenase cicH and the O-methyltransferase cicE are involved in the conversion of 3-methylorsellinate into nidulol. CicB converts 3-methylorsellinate to a yet unidentified intermediate, cicH may play a ring-closing role for cichorine and cicE is plausibly responsible for the methylation of one of the phenol groups. The oxidoreductase cicC acts downstream with still unidentified enzymes to further convert nidulol into cichorine. This chain is Cytochrome P450 monooxygenase cicH, found in Emericella nidulans (strain FGSC A4 / ATCC 38163 / CBS 112.46 / NRRL 194 / M139) (Aspergillus nidulans).